A 132-amino-acid chain; its full sequence is Phosphomevalonate dehydratase small subunit (132 aa).

Ser61 serves as the catalytic Proton acceptor.

It belongs to the AcnX type II small subunit family. In terms of assembly, heterodimer composed of a large subunit (PMDh-L) and a small subunit (PMDh-S).

It catalyses the reaction (R)-5-phosphomevalonate = (2E)-3-methyl-5-phosphooxypent-2-enoate + H2O. The protein operates within isoprenoid biosynthesis; isopentenyl diphosphate biosynthesis via mevalonate pathway. Component of a hydro-lyase that catalyzes the dehydration of mevalonate 5-phosphate (MVA5P) to form trans-anhydromevalonate 5-phosphate (tAHMP). Involved in the archaeal mevalonate (MVA) pathway, which provides fundamental precursors for isoprenoid biosynthesis, such as isopentenyl diphosphate (IPP) and dimethylallyl diphosphate (DMAPP). This chain is Phosphomevalonate dehydratase small subunit, found in Archaeoglobus fulgidus (strain ATCC 49558 / DSM 4304 / JCM 9628 / NBRC 100126 / VC-16).